Consider the following 394-residue polypeptide: Elongation factor Tu (394 aa).

The 196-residue stretch at 10 to 205 folds into the tr-type G domain; sequence KPHMNVGTIG…TMDSYFDLPE (196 aa). The G1 stretch occupies residues 19–26; the sequence is GHVDHGKT. 19 to 26 is a GTP binding site; it reads GHVDHGKT. Thr-26 is a binding site for Mg(2+). The G2 stretch occupies residues 61 to 65; sequence GITIN. Residues 82 to 85 are G3; it reads DCPG. GTP contacts are provided by residues 82 to 86 and 137 to 140; these read DCPGH and NKLD. A G4 region spans residues 137 to 140; sequence NKLD. A G5 region spans residues 173 to 175; the sequence is SAF.

This sequence belongs to the TRAFAC class translation factor GTPase superfamily. Classic translation factor GTPase family. EF-Tu/EF-1A subfamily. As to quaternary structure, monomer.

It is found in the cytoplasm. The catalysed reaction is GTP + H2O = GDP + phosphate + H(+). In terms of biological role, GTP hydrolase that promotes the GTP-dependent binding of aminoacyl-tRNA to the A-site of ribosomes during protein biosynthesis. The sequence is that of Elongation factor Tu from Borrelia hermsii (strain HS1 / DAH).